The chain runs to 305 residues: MKKFLKVWSVLTIICMTVVVFGGALVTKTGSADGCGNSWPLCNGQLVRLTDVTPEKLIEFMHRMTTGISSIFVIVLAICAWIYMKNRRETKPLAIIAVLFLIIQALMGMAAVVWGQNPYIMALHFGISIICYASIVLLALMIFEVDRKFDARNLVMGTKLRINIYALTIYTYLAVYTGALVRHEKASMAVPVWPFENGKFIMPDSVQDYVQYFHRVAAFILIVWLLYVTWLVFRDYRRYRVLTFSMVLSLLFIALQAVTGALSVYTGVNLYIALAHSLIITMLFALLCYLCLLASRSKSNRLRIK.

Topologically, residues 1-6 (MKKFLK) are cytoplasmic. The chain crosses the membrane as a helical span at residues 7 to 27 (VWSVLTIICMTVVVFGGALVT). Residues 28 to 63 (KTGSADGCGNSWPLCNGQLVRLTDVTPEKLIEFMHR) lie on the Extracellular side of the membrane. A disulfide bond links Cys35 and Cys42. The active site involves Glu59. Residue His62 participates in heme o binding. A helical membrane pass occupies residues 64-84 (MTTGISSIFVIVLAICAWIYM). Over 85–92 (KNRRETKP) the chain is Cytoplasmic. The chain crosses the membrane as a helical span at residues 93–113 (LAIIAVLFLIIQALMGMAAVV). At 114 to 122 (WGQNPYIMA) the chain is on the extracellular side. Residues 123-143 (LHFGISIICYASIVLLALMIF) form a helical membrane-spanning segment. His124 is a heme o binding site. Topologically, residues 144 to 160 (EVDRKFDARNLVMGTKL) are cytoplasmic. The helical transmembrane segment at 161–181 (RINIYALTIYTYLAVYTGALV) threads the bilayer. At 182-212 (RHEKASMAVPVWPFENGKFIMPDSVQDYVQY) the chain is on the extracellular side. A helical transmembrane segment spans residues 213–233 (FHRVAAFILIVWLLYVTWLVF). Heme b is bound at residue His214. Over 234–240 (RDYRRYR) the chain is Cytoplasmic. A helical membrane pass occupies residues 241 to 261 (VLTFSMVLSLLFIALQAVTGA). Over 262-271 (LSVYTGVNLY) the chain is Extracellular. Residues 272–292 (IALAHSLIITMLFALLCYLCL) form a helical membrane-spanning segment. His276 contributes to the heme b binding site. At 293-305 (LASRSKSNRLRIK) the chain is on the cytoplasmic side.

Belongs to the COX15/CtaA family. Type 1 subfamily. In terms of assembly, interacts with CtaB. Heme b serves as cofactor.

Its subcellular location is the cell membrane. It catalyses the reaction Fe(II)-heme o + 2 A + H2O = Fe(II)-heme a + 2 AH2. It participates in porphyrin-containing compound metabolism; heme A biosynthesis; heme A from heme O: step 1/1. Functionally, catalyzes the conversion of heme O to heme A by two successive hydroxylations of the methyl group at C8. The first hydroxylation forms heme I, the second hydroxylation results in an unstable dihydroxymethyl group, which spontaneously dehydrates, resulting in the formyl group of heme A. The sequence is that of Heme A synthase from Listeria welshimeri serovar 6b (strain ATCC 35897 / DSM 20650 / CCUG 15529 / CIP 8149 / NCTC 11857 / SLCC 5334 / V8).